The following is a 633-amino-acid chain: MFHGTITKELTSHEEWSHYNENIVEDQKDFVFVKYNGLHLKSMENLQSCISLRVCIFSNNFVTDIQPLQGCKKLIKLDLHGNQIKTLPDRTFWNGLKNLKLLYLHDNGFAKLKNICVLSGCVNLVGLTMFDCPVSLKKGYRHVLVNSIWPLKALDHHVISDEEIIQNWHLPERFKTFSQSLFFNICPAPIKGTTYEDEIKNIKHIISRINEILAHNSPVLIIQRWIRGFIVRKHLSPYFTRKRHHDRMIRVLETKLICIGRNNEDKFLEDIFLIKPESNIKGKVAHWKQMRYSPDDFKYSTEYRKHISCLSYELKTKDIAGNSKQPRHHIQKGQNEMKSDSEDEEVDTKFRISAMKIPLCPSRSLKYRAMLKEIKWDYFPEYLQPLPATRQKPQVKRETHEELKERRNFLASQRAGMDLHLFNDIDKYYSEQRQQEEEARKFAATAAAQVAQERARLNTSENLRKKISMARKLMQKDNETIQKGLRHIWKERLNYLEKVRERKSMFLAEKKLNAADQSLVLSLNNERSILLRGIIQVDKLKRDLSEMKAKHFDVIEKREKRKYKQNLLTEMKKLRAEEIHKRHCEERFVIDTLIFQKGCERLEEAKAKVEFINTYYTSKSHKKYHNKTMLNHI.

LRR repeat units lie at residues 51 to 72 (SLRV…QGCK), 73 to 94 (KLIK…TFWN), and 98 to 119 (NLKL…CVLS). Residues 132–179 (CPVSLKKGYRHVLVNSIWPLKALDHHVISDEEIIQNWHLPERFKTFSQ) enclose the LRRCT domain. Positions 215 to 244 (HNSPVLIIQRWIRGFIVRKHLSPYFTRKRH) constitute an IQ domain. The interval 322 to 343 (NSKQPRHHIQKGQNEMKSDSED) is disordered. The stretch at 556–616 (EKREKRKYKQ…AKVEFINTYY (61 aa)) forms a coiled coil.

This chain is Leucine-rich repeat and IQ domain-containing protein 3 (Lrriq3), found in Rattus norvegicus (Rat).